Consider the following 325-residue polypeptide: RNA ligase 1 (325 aa).

Requires Mg(2+) as cofactor. It depends on Mn(2+) as a cofactor. AMPylates itself (auto-AMPylation).

The catalysed reaction is ATP + (ribonucleotide)n-3'-hydroxyl + 5'-phospho-(ribonucleotide)m = (ribonucleotide)n+m + AMP + diphosphate.. Its function is as follows. Functions as an RNA ligase, in vitro. The ligation reaction entails three nucleotidyl transfer steps. In the first step, the RNA ligase reacts with ATP in the absence of nucleic acid to form a covalent ligase-AMP intermediate and release pyrophosphate. In step 2, the ligase-AMP binds to the nucleic acid and transfers the adenylate to the 5'-PO4 terminus to form an adenylylated intermediate. In step 3, the RNA ligase directs the attack of the 3'-OH on the 5'-phosphoanhydride linkage, resulting in a repaired 3'-5' phosphodiester and release of AMP. Exhibits selectivity for single-stranded RNA substrates and may not have nick-sealing activity on double-stranded DNA-RNA hybrids. May play a role in maintaining RNA integrity under stress conditions, for example in response to reactive oxygen species (ROS). This Pongo abelii (Sumatran orangutan) protein is RNA ligase 1.